The chain runs to 472 residues: Proline--tRNA ligase (472 aa).

It belongs to the class-II aminoacyl-tRNA synthetase family. ProS type 3 subfamily. In terms of assembly, homodimer.

It is found in the cytoplasm. It catalyses the reaction tRNA(Pro) + L-proline + ATP = L-prolyl-tRNA(Pro) + AMP + diphosphate. Its function is as follows. Catalyzes the attachment of proline to tRNA(Pro) in a two-step reaction: proline is first activated by ATP to form Pro-AMP and then transferred to the acceptor end of tRNA(Pro). This is Proline--tRNA ligase from Ureaplasma urealyticum serovar 10 (strain ATCC 33699 / Western).